The sequence spans 418 residues: MTSREASQAPLEFGGPLGVAALLILLPATMFHLLLAARSGPARLLALPAYLPGLEELWSPWALLLLFIWLGLQVALYLLPARKVAEGLELKDKSRLRYPINGFQALVLTALLMGLGVSVGLPLGALPGMLLPLAFATTLTSFIFSLLLYAKALVAPASALAPGGNSGNSMYDFFLGRELNPRLGSFDFKYFCELRPGLIGWVFINLALLMQEAELRGSPSLAMWLVNGFQLLYVGDALWYEESVLTTMDIIHDGFGFMLVFGDLAWVPFTYSLQAQFLLYHPQPLGLPMALLICLLKVIGYYIFRGANSQKNTFRKNPSDPSVAGLETIPTATGRQLLVSGWWGMVRHPNYLGDLIMALAWSLPCGLSHLLPYFYVLYFTALLVHREARDEQQCLQKYGRAWQEYCKRVPYRIIPYVY.

6 helical membrane-spanning segments follow: residues 13–35, 62–81, 102–124, 129–148, 255–277, and 287–304; these read FGGPLGVAALLILLPATMFHLLL, ALLLLFIWLGLQVALYLLPA, GFQALVLTALLMGLGVSVGLPLG, MLLPLAFATTLTSFIFSLLL, FGFMLVFGDLAWVPFTYSLQAQF, and LPMALLICLLKVIGYYIF. NADP(+) is bound by residues Lys311, Arg315, Leu338, Trp343, and 350 to 351; that span reads NY. A helical transmembrane segment spans residues 355–377; it reads LIMALAWSLPCGLSHLLPYFYVL. NADP(+)-binding positions include Asp390, 394–398, and Tyr405; that span reads CLQKY.

Belongs to the ERG4/ERG24 family. Strongly expressed in liver, weaker in ovary, testis, kidney and brain.

Its subcellular location is the endoplasmic reticulum membrane. The protein resides in the microsome membrane. It carries out the reaction 4,4-dimethyl-5alpha-cholesta-8,24-dien-3beta-ol + NADP(+) = 4,4-dimethyl-5alpha-cholesta-8,14,24-trien-3beta-ol + NADPH + H(+). It catalyses the reaction 5alpha-cholest-8,14-dien-3beta-ol + NADPH + H(+) = 5alpha-cholest-8-en-3beta-ol + NADP(+). The enzyme catalyses 4,4-dimethyl-8,14-cholestadien-3beta-ol + NADPH + H(+) = 4,4-dimethyl-5alpha-cholest-8-en-3beta-ol + NADP(+). It functions in the pathway steroid biosynthesis; cholesterol biosynthesis. Functionally, catalyzes the reduction of the C14-unsaturated bond of lanosterol, as part of the metabolic pathway leading to cholesterol biosynthesis. This is Delta(14)-sterol reductase TM7SF2 (Tm7sf2) from Mus musculus (Mouse).